A 354-amino-acid chain; its full sequence is Uroporphyrinogen decarboxylase (354 aa).

Substrate contacts are provided by residues 27-31 (RQAGR), Asp77, Tyr154, Ser209, and His327.

It belongs to the uroporphyrinogen decarboxylase family. In terms of assembly, homodimer.

It is found in the cytoplasm. It carries out the reaction uroporphyrinogen III + 4 H(+) = coproporphyrinogen III + 4 CO2. It functions in the pathway porphyrin-containing compound metabolism; protoporphyrin-IX biosynthesis; coproporphyrinogen-III from 5-aminolevulinate: step 4/4. Catalyzes the decarboxylation of four acetate groups of uroporphyrinogen-III to yield coproporphyrinogen-III. The chain is Uroporphyrinogen decarboxylase from Shewanella denitrificans (strain OS217 / ATCC BAA-1090 / DSM 15013).